We begin with the raw amino-acid sequence, 195 residues long: Phosphoheptose isomerase (195 aa).

An SIS domain is found at 36–195 (VSKVLQSGNT…IVEYNLFKME (160 aa)). 51–53 (NGG) is a substrate binding site. Zn(2+) contacts are provided by His-60 and Glu-64. Substrate contacts are provided by residues Glu-64, 95-96 (ND), 121-123 (STS), Ser-126, and Gln-173. 2 residues coordinate Zn(2+): Gln-173 and His-181.

This sequence belongs to the SIS family. GmhA subfamily. Zn(2+) is required as a cofactor.

Its subcellular location is the cytoplasm. The enzyme catalyses 2 D-sedoheptulose 7-phosphate = D-glycero-alpha-D-manno-heptose 7-phosphate + D-glycero-beta-D-manno-heptose 7-phosphate. Its pathway is carbohydrate biosynthesis; D-glycero-D-manno-heptose 7-phosphate biosynthesis; D-glycero-alpha-D-manno-heptose 7-phosphate and D-glycero-beta-D-manno-heptose 7-phosphate from sedoheptulose 7-phosphate: step 1/1. In terms of biological role, catalyzes the isomerization of sedoheptulose 7-phosphate in D-glycero-D-manno-heptose 7-phosphate. The sequence is that of Phosphoheptose isomerase from Leptospira borgpetersenii serovar Hardjo-bovis (strain JB197).